A 359-amino-acid polypeptide reads, in one-letter code: Peptide chain release factor 1 (359 aa).

Residue glutamine 236 is modified to N5-methylglutamine.

Belongs to the prokaryotic/mitochondrial release factor family. Post-translationally, methylated by PrmC. Methylation increases the termination efficiency of RF1.

Its subcellular location is the cytoplasm. Its function is as follows. Peptide chain release factor 1 directs the termination of translation in response to the peptide chain termination codons UAG and UAA. In Streptococcus mutans serotype c (strain ATCC 700610 / UA159), this protein is Peptide chain release factor 1.